A 417-amino-acid chain; its full sequence is Cysteate synthase (417 aa).

Lysine 104 is modified (N6-(pyridoxal phosphate)lysine). Positions 131 and 371 each coordinate pyridoxal 5'-phosphate.

The protein belongs to the threonine synthase family. Cysteate synthase subfamily. Homotrimer. Pyridoxal 5'-phosphate is required as a cofactor.

It carries out the reaction O-phospho-L-serine + sulfite + H(+) = L-cysteate + phosphate. Its pathway is cofactor biosynthesis; coenzyme M biosynthesis. Its function is as follows. Specifically catalyzes the beta-elimination of phosphate from L-phosphoserine and the beta-addition of sulfite to the dehydroalanine intermediate to produce L-cysteate. In Methanococcoides burtonii (strain DSM 6242 / NBRC 107633 / OCM 468 / ACE-M), this protein is Cysteate synthase.